The sequence spans 382 residues: MSTTLQPLPGGLQVAVQACLFLGAVSRSRRFRALLFPPVLAMSLYMLLYTTTGKDSDDIVTWSLITTSLLQGSDILLINDVADLRLVGQKTPTNELSLWQRIKWAGRLMSAPRAVGFTHESRHVFPPHPPANEPRWTFIKRQSLTTLFYFVVLDLVHTFIVLSPVFQRDGVSLTSVDWPMRFLYTALHAAHLWSYMSFGYSAASVVLVALGVSDSDQWPAIYGDWSNAYTIRRFWGRVWHQVFRRIVSTHGDFVTYRFLALPKGTFFADNVHRYTAFFISGVIHAVGEYGMFRDQWLQKSGALRFFLLQATAILVEQEVGKIFKLQPTPLLRRLGYMWTFLWFVFTLPHWMDPQFRQGMADNYGFPLSVSYGLLKGQWRLVA.

6 helical membrane passes run leucine 5–valine 25, alanine 33–glycine 53, isoleucine 59–asparagine 79, threonine 146–phenylalanine 166, leucine 192–valine 212, and glycine 335–phenylalanine 355.

It belongs to the wax synthase family.

It is found in the membrane. It catalyses the reaction cyathatriol + acetyl-CoA = 11-O-acetylcyathatriol + CoA. It carries out the reaction cyathin A3 + acetyl-CoA = 11-O-acetylcyathin A3 + CoA. Its pathway is secondary metabolite biosynthesis. Its function is as follows. Acetyltransferase; part of the gene cluster that mediates the biosynthesis of erinacines, cyathane-xylosides that show unique biological activities, including leishmanicidal activity, stimulating activity for nerve growth-factor synthesis, and agonistic activity toward the kappa opioid receptor. Within the pathway, eriL converts cyathatriol into 11-O-acetyl-cyathatriol. EriL is also able to acetylate cyathin A3 to produce 11-O-acetylcyathin A3. The first step of the erinacines biosynthesis pathway is catalyzed by the geranylgeranyl diphosphate (GGPP) synthase eriE via conversion of farnesyl pyrophosphate and isopentyl pyrophosphate into geranylgeranyl pyrophosphate (GGPP). GGPP is then substrate of the diterpene cyclase eriG for the production of cyatha-3,12-diene. The cytochrome P450 monooxygenase eriI then hydroxylates cyatha-3,12-diene at C-14 of the seven-membered ring to produce erinacol, which is further hydroxylated at C-15 by the cytochrome P450 monooxygenase eriC to yield cyathadiol. The cytochrome P450 monooxygenase eriA then catalyzes C-11 hydroxylation in the presence of the short chain dehydrogenase/reductase (SDR) eriH, which leads to the production of cyathatriol. The acetyltransferase eriL converts cyathatriol into 11-O-acetyl-cyathatriol. The SDR eriH catalyzes further oxidation of 11-O-acetyl-cyathatriol into 1-O-acetylcyathin A3. Finally, the glycosyl transferase eriJ tranfers xylose from UDP-xylose onto C-14 of 11-O-acetyl-cyathatriol to form eracine Q. EriJ is also able to convert 11-O-acetyl-cyathatriol to eracine Q2 by using UDP-D-glucose as cosubstrate, but at a lower rate. The sequence is that of Acetyltransferase eriL from Hericium erinaceus (Lion's mane mushroom).